The sequence spans 719 residues: MKIIFNLLILFSLVNFINSQSTTQATTLKLEGTIYDQYPYYDNNFEPIAGSLTTRLVQNAINTTTRTPTLNTLLPFTTTNVMGRMVTPSLFQYFYQPNKNAPLTNNSGANFPIPMTVNLTLNPSTGTYVYDNQFFFPIDYQGFDTNPFYRNYTDGTDYHNFHFCLKINTRFTYTGNEVFYFVGDDDVWVFINDQLVIDLGGLHEAAGKNIDLTTLGLTKNKDYTFDFFYCERHTTKSTIRIETSIQAYCPFYDYCGVCYGDGSTCCDPVVNCNDGDLCTIDSCPPRDTIIPAGFSISDLCQHAPVSCPSIDMCTNNTCDSKSGQCTPTSIKCDDKSSQCLTLKPCDPSSGCLYTSSCTSAHNPCNTGACSNGQCQTKSNSTCAAELGNDPCKVYYCDINSGCVSQPLCKQGPDSCEQNVCNAGVCTIKKLDPSVCSCGCVLNKCQKNNCVTASNGTSVCSPLPLDEIDDGNPCTDDHCDETTGLITHNITTKCTGCMKCNTTTGSCSPTNNECQDGNECTDNICVAAATNINQGECSNKTVSCPTTDKCLVYTCDTNKGCVSKPVVCPNSGNCQVGVCDSVKGCTLVPRVCNSTAFCLVSQCDEAIGCITFEKRCSPDNSKCQSGVCVNATATEPGKCKSVDYDPKPFICQTGAIVSTAVVASVVVVGAVVLGAAIFAGKKGYDHWKANQGQVFASSNANPLYQQSNNGGENALFEAPQ.

A signal peptide spans 1–19; it reads MKIIFNLLILFSLVNFINS. The Extracellular portion of the chain corresponds to 20-658; that stretch reads QSTTQATTLK…ICQTGAIVST (639 aa). Residues N62, N105, N118, N151, N315, N379, N454, N488, N500, N538, N592, and N629 are each glycosylated (N-linked (GlcNAc...) asparagine). Residues 119-261 enclose the PA14 domain; that stretch reads LTLNPSTGTY…YDYCGVCYGD (143 aa). The chain crosses the membrane as a helical span at residues 659-679; that stretch reads AVVASVVVVGAVVLGAAIFAG. At 680–719 the chain is on the cytoplasmic side; the sequence is KKGYDHWKANQGQVFASSNANPLYQQSNNGGENALFEAPQ.

This sequence belongs to the prespore-cell-inducing factor family.

The protein localises to the membrane. In Dictyostelium discoideum (Social amoeba), this protein is Protein psiI (psiI).